We begin with the raw amino-acid sequence, 873 residues long: Mitogen-activated protein kinase kinase kinase kinase 3 (873 aa).

Methionine 1 carries the N-acetylmethionine modification. The Protein kinase domain occupies 16 to 273 (FELIQRIGSG…AEKLLQHPFV (258 aa)). Residues 22-30 (IGSGTYGDV) and lysine 45 each bind ATP. The active-site Proton acceptor is aspartate 136. 2 positions are modified to phosphoserine: serine 329 and serine 377. The disordered stretch occupies residues 389-518 (AHLEDDEGDD…KPISNGLPPT (130 aa)). Residues 452 to 466 (HVPPRPPPPRLPPQK) are compositionally biased toward pro residues. The span at 487–499 (VHQQQSEQRGTNL) shows a compositional bias: polar residues. Residues 535–846 (PLKIHCATSW…IFRLLGSDRV (312 aa)) form the CNH domain.

Belongs to the protein kinase superfamily. STE Ser/Thr protein kinase family. STE20 subfamily. Interacts with SH3GL2. Interaction appears to regulate MAP4K3-mediated JNK activation. Mg(2+) serves as cofactor.

The enzyme catalyses L-seryl-[protein] + ATP = O-phospho-L-seryl-[protein] + ADP + H(+). The catalysed reaction is L-threonyl-[protein] + ATP = O-phospho-L-threonyl-[protein] + ADP + H(+). Serine/threonine kinase that plays a role in the response to environmental stress. Appears to act upstream of the JUN N-terminal pathway. Activator of the Hippo signaling pathway which plays a pivotal role in organ size control and tumor suppression by restricting proliferation and promoting apoptosis. MAP4Ks act in parallel to and are partially redundant with STK3/MST2 and STK4/MST2 in the phosphorylation and activation of LATS1/2, and establish MAP4Ks as components of the expanded Hippo pathway. In Rattus norvegicus (Rat), this protein is Mitogen-activated protein kinase kinase kinase kinase 3 (Map4k3).